Reading from the N-terminus, the 320-residue chain is Tryptophan--tRNA ligase (320 aa).

ATP is bound by residues 8-10 (QPT) and 16-17 (GN). Positions 9–17 (PTGRPHWGN) match the 'HIGH' region motif. D131 provides a ligand contact to L-tryptophan. Residues 143-145 (GVD), V182, and 189-193 (KMSKS) contribute to the ATP site. The 'KMSKS' region motif lies at 189 to 193 (KMSKS).

Belongs to the class-I aminoacyl-tRNA synthetase family. As to quaternary structure, homodimer.

It is found in the cytoplasm. The enzyme catalyses tRNA(Trp) + L-tryptophan + ATP = L-tryptophyl-tRNA(Trp) + AMP + diphosphate + H(+). Its function is as follows. Catalyzes the attachment of tryptophan to tRNA(Trp). The protein is Tryptophan--tRNA ligase of Rhodopirellula baltica (strain DSM 10527 / NCIMB 13988 / SH1).